Consider the following 105-residue polypeptide: uncharacterized protein (105 aa).

This is an uncharacterized protein from Schizosaccharomyces pombe (strain 972 / ATCC 24843) (Fission yeast).